A 569-amino-acid chain; its full sequence is MPTKIPRNDYAAMYGPTTGDRVRLADTDLIIEVERDLTTYGEEVKFGGGKVIRDGMGQSQVTRAQCAVDTVITNALIVDHSGIYKADVGLKDGRIHKIGKAGNPDTQPNVDIIIGPGTEAIAGEGRILTAGGFDAHIHFICPQQIEDSLHSGITTMLGGGTGPAHGTLATTCTPGPWHIGRMLQSLDAFPMNFGLSCKGNASQPEALVEMVSAGACAMKLHEDWGTTPGAIDCCLSVADEMDVQVMIHTDTLNESGFVENTLAAIGDRTIHAFHTEGAGGGHAPDIMKVVGYENILPSSTNPTMPYTVNTLEEHLDMLMVCHHLDKSIPEDVAFAESRIRKETIAAEDILHDMGAFSVMASDSQAMGRVGEVIIRTWQTADKMKKQRGRLAEETGDNDNARVMRYIAKYTINPALVHGMSREIGSIEEGKRADLVLWSPAFFGVKPEMSLIGGTIVMAQMGDPNASIPTPQPVYSRPMFGAFGRAVERSAVLFVSEAAQAAGIGDQLGLAKDTLAVKSTRDIRKSDMIHNSFRPDIHVDPETYDVRANGELLTCEPATDLPLAQRYFMY.

Positions 131-569 (GGFDAHIHFI…LPLAQRYFMY (439 aa)) constitute a Urease domain. The Ni(2+) site is built by His-136, His-138, and Lys-219. Lys-219 carries the post-translational modification N6-carboxylysine. His-221 is a binding site for substrate. Residues His-248 and His-274 each coordinate Ni(2+). His-322 (proton donor) is an active-site residue. A Ni(2+)-binding site is contributed by Asp-362.

Belongs to the metallo-dependent hydrolases superfamily. Urease alpha subunit family. As to quaternary structure, heterotrimer of UreA (gamma), UreB (beta) and UreC (alpha) subunits. Three heterotrimers associate to form the active enzyme. Ni cation is required as a cofactor. In terms of processing, carboxylation allows a single lysine to coordinate two nickel ions.

Its subcellular location is the cytoplasm. The enzyme catalyses urea + 2 H2O + H(+) = hydrogencarbonate + 2 NH4(+). The protein operates within nitrogen metabolism; urea degradation; CO(2) and NH(3) from urea (urease route): step 1/1. This is Urease subunit alpha from Jannaschia sp. (strain CCS1).